The sequence spans 176 residues: MILANDELKRLISLGRLKVEPLAPDTVRENGLDLRIGGEYAIYAYEGAVVKPCELDSARPLFRVVKADEVVIPPRNFVLLTTEEYVKMPDDVVGLANLRSTLARYGLVIPPTVVDAGFEGNITIEVVNESPNTIVLRRGMRFLHLILVKAEGRALYSGTYQGQRGVTPPKGLRGEC.

DCTP is bound by residues 99 to 104 (RSTLAR) and Asp-115. Glu-125 functions as the Proton donor/acceptor in the catalytic mechanism. Residue Gln-163 coordinates dCTP.

The protein belongs to the dCTP deaminase family. As to quaternary structure, homotrimer.

It catalyses the reaction dCTP + H2O + H(+) = dUTP + NH4(+). The protein operates within pyrimidine metabolism; dUMP biosynthesis; dUMP from dCTP (dUTP route): step 1/2. Catalyzes the deamination of dCTP to dUTP. The chain is dCTP deaminase from Pyrobaculum neutrophilum (strain DSM 2338 / JCM 9278 / NBRC 100436 / V24Sta) (Thermoproteus neutrophilus).